The primary structure comprises 206 residues: Platelet glycoprotein Ib beta chain (206 aa).

Positions 1-25 (MGSGPRGALSLLLLLLAPPSRPAAG) are cleaved as a signal peptide. Disulfide bonds link Cys26–Cys32 and Cys30–Cys39. Residues 27–55 (PAPCSCAGTLVDCGRRGLTWASLPTAFPV) enclose the LRRNT domain. Residues 27 to 147 (PAPCSCAGTL…RAACAPGPLC (121 aa)) lie on the Extracellular side of the membrane. Residues 60–83 (LVLTGNNLTALPPGLLDALPALRT) form an LRR repeat. Asn66 carries an N-linked (GlcNAc...) asparagine glycan. Residues 89–143 (NPWRCDCRLVPLRAWLAGRPERAPYRDLRCVAPPALRGRLLPYLAEDELRAACAP) enclose the LRRCT domain. Intrachain disulfides connect Cys93-Cys118 and Cys95-Cys141. Residues 148–172 (WGALAAQLALLGLGLLHALLLVLLL) traverse the membrane as a helical segment. Over 173 to 206 (CRLRRLRARARARAAARLSLTDPLVAERAGTDES) the chain is Cytoplasmic. Position 191 is a phosphoserine; by PKA (Ser191). Thr193 bears the Phosphothreonine mark.

As to quaternary structure, two GP-Ib beta are disulfide-linked to one GP-Ib alpha. GP-IX is complexed with the GP-Ib heterodimer via a non covalent linkage. Interacts with TRAF4. As to expression, expressed in heart and brain.

The protein resides in the membrane. Gp-Ib, a surface membrane protein of platelets, participates in the formation of platelet plugs by binding to von Willebrand factor, which is already bound to the subendothelium. The protein is Platelet glycoprotein Ib beta chain (GP1BB) of Homo sapiens (Human).